Here is a 637-residue protein sequence, read N- to C-terminus: Phospholipase B (637 aa).

A signal peptide spans 1-19 (MSIITTAFALSLLATTAFA). Positions 46–572 (DCPSNVTWIR…DTWCWAGDDN (527 aa)) constitute a PLA2c domain. Residues N50, N56, N122, N231, N246, N272, N314, N343, N387, N433, N481, N501, N528, N553, N572, N594, and N606 are each glycosylated (N-linked (GlcNAc...) asparagine).

It belongs to the lysophospholipase family. Post-translationally, N-glycosylated.

The protein localises to the secreted. It carries out the reaction a 1-acyl-sn-glycero-3-phosphocholine + H2O = sn-glycerol 3-phosphocholine + a fatty acid + H(+). In terms of biological role, exhibits phospholipase B (PLB), lysophospholipase (LPL) and lysophospholipase/transacylase (LPTA) activities. In Cryptococcus neoformans var. neoformans serotype D (strain B-3501A) (Filobasidiella neoformans), this protein is Phospholipase B (PLB1).